A 229-amino-acid polypeptide reads, in one-letter code: DNA mismatch repair protein MutH (229 aa).

It belongs to the MutH family.

It localises to the cytoplasm. Sequence-specific endonuclease that cleaves unmethylated GATC sequences. It is involved in DNA mismatch repair. This is DNA mismatch repair protein MutH from Shigella flexneri.